The primary structure comprises 181 residues: Adenine phosphoribosyltransferase (181 aa).

Belongs to the purine/pyrimidine phosphoribosyltransferase family. In terms of assembly, homodimer.

The protein resides in the cytoplasm. It catalyses the reaction AMP + diphosphate = 5-phospho-alpha-D-ribose 1-diphosphate + adenine. It participates in purine metabolism; AMP biosynthesis via salvage pathway; AMP from adenine: step 1/1. Its function is as follows. Catalyzes a salvage reaction resulting in the formation of AMP, that is energically less costly than de novo synthesis. The chain is Adenine phosphoribosyltransferase from Methylorubrum extorquens (strain CM4 / NCIMB 13688) (Methylobacterium extorquens).